The chain runs to 48 residues: Cathepsin B (48 aa).

The protein belongs to the peptidase C1 family. Dimer of a heavy chain and a light chain cross-linked by a disulfide bond.

It localises to the lysosome. It catalyses the reaction Hydrolysis of proteins with broad specificity for peptide bonds. Preferentially cleaves -Arg-Arg-|-Xaa bonds in small molecule substrates (thus differing from cathepsin L). In addition to being an endopeptidase, shows peptidyl-dipeptidase activity, liberating C-terminal dipeptides.. In terms of biological role, thiol protease which is believed to participate in intracellular degradation and turnover of proteins. Has also been implicated in tumor invasion and metastasis. The sequence is that of Cathepsin B (CTSB) from Coturnix japonica (Japanese quail).